Here is a 365-residue protein sequence, read N- to C-terminus: MTENHYLLLTPGPLTTTKTVKEVMLYDWCTWDVEYNTMVQKVRAKLVSLATKEEEKYTTVLMQGSGTFSVEAVIGSVIPKNGKLLVCTNGAYGKRIVQMAEMLHIDVVVSQTEEWEPTNIVEVEKILQQDKEITHIAVVHCETTTGIINPIVDVCKLGKQYGKVTLVDAMSSFGGIEIDIAELQIDFLISSANKCIQGVPGFGFVIAKRDELLKCKGQARSLSLDLYDQWETMENQNGKWRFTSPTHVVHAFYQALLELEKEGGVRARYNRYYNNQKLLVNRMGEIGFKPIVNEKYQSPIITSFIYPEGNFEFQQLYNELKRYGFVIYPGKISKVDTFRIGNIGDVHEEDINRLVDSIAKGVVIG.

N6-(pyridoxal phosphate)lysine is present on Lys-194.

The protein belongs to the class-V pyridoxal-phosphate-dependent aminotransferase family. PhnW subfamily. Homodimer. It depends on pyridoxal 5'-phosphate as a cofactor.

The catalysed reaction is (2-aminoethyl)phosphonate + pyruvate = phosphonoacetaldehyde + L-alanine. Its function is as follows. Involved in phosphonate degradation. The sequence is that of 2-aminoethylphosphonate--pyruvate transaminase from Bacillus cereus (strain ZK / E33L).